The following is a 546-amino-acid chain: Glucose-6-phosphate isomerase (546 aa).

Glu-355 functions as the Proton donor in the catalytic mechanism. Active-site residues include His-386 and Lys-510.

The protein belongs to the GPI family.

The protein resides in the cytoplasm. The catalysed reaction is alpha-D-glucose 6-phosphate = beta-D-fructose 6-phosphate. It participates in carbohydrate biosynthesis; gluconeogenesis. The protein operates within carbohydrate degradation; glycolysis; D-glyceraldehyde 3-phosphate and glycerone phosphate from D-glucose: step 2/4. Functionally, catalyzes the reversible isomerization of glucose-6-phosphate to fructose-6-phosphate. This Buchnera aphidicola subsp. Cinara cedri (strain Cc) protein is Glucose-6-phosphate isomerase.